The chain runs to 111 residues: Tubulin beta chain (111 aa).

Residues 82 to 111 (SEYQQYQDATAEDEGEFDEEEAEGEGQEYA) form a disordered region. Over residues 91–111 (TAEDEGEFDEEEAEGEGQEYA) the composition is skewed to acidic residues.

It belongs to the tubulin family. In terms of assembly, dimer of alpha and beta chains. A typical microtubule is a hollow water-filled tube with an outer diameter of 25 nm and an inner diameter of 15 nM. Alpha-beta heterodimers associate head-to-tail to form protofilaments running lengthwise along the microtubule wall with the beta-tubulin subunit facing the microtubule plus end conferring a structural polarity. Microtubules usually have 13 protofilaments but different protofilament numbers can be found in some organisms and specialized cells. Mg(2+) serves as cofactor.

The protein resides in the cytoplasm. Its subcellular location is the cytoskeleton. Its function is as follows. Tubulin is the major constituent of microtubules, a cylinder consisting of laterally associated linear protofilaments composed of alpha- and beta-tubulin heterodimers. Microtubules grow by the addition of GTP-tubulin dimers to the microtubule end, where a stabilizing cap forms. Below the cap, tubulin dimers are in GDP-bound state, owing to GTPase activity of alpha-tubulin. The chain is Tubulin beta chain from Lymnaea stagnalis (Great pond snail).